A 616-amino-acid chain; its full sequence is Fatty acyl-CoA reductase 2, chloroplastic (616 aa).

The transit peptide at 1-14 (MEALFLSSSSSSIV) directs the protein to the chloroplast. The NAD(P)H-binding motif lies at 133–143 (FLITGSTGFLA). Catalysis depends on residues Y357 and K361.

The protein belongs to the fatty acyl-CoA reductase family. As to expression, expressed in the tapetum of anthers.

The protein resides in the plastid. It localises to the chloroplast. It carries out the reaction a long-chain fatty acyl-CoA + 2 NADPH + 2 H(+) = a long-chain primary fatty alcohol + 2 NADP(+) + CoA. It catalyses the reaction hexadecanoyl-CoA + 2 NADPH + 2 H(+) = hexadecan-1-ol + 2 NADP(+) + CoA. The catalysed reaction is hexadecanoyl-[ACP] + 2 NADPH + 2 H(+) = hexadecan-1-ol + holo-[ACP] + 2 NADP(+). Functionally, catalyzes the reduction of fatty acyl-CoA and -ACP (acyl carrier protein) substrates to fatty alcohols. Triggers the accumulation of C16 and C18 fatty alcohols; converts palmitoyl-acyl carrier protein to the corresponding C16:0 alcohol with NAD(P)H as electron donor, but seems inactive toward palmitoyl- or other acyl-coenzyme A. Also triggers the formation of some C16:0 aldehydes. Involved in the synthesis of the lipid component in sporopollenin. Required for exine patterning of pollen grain by mediating the formation of pollen wall substances. The chain is Fatty acyl-CoA reductase 2, chloroplastic from Arabidopsis thaliana (Mouse-ear cress).